Here is a 350-residue protein sequence, read N- to C-terminus: tRNA uridine(34) hydroxylase (350 aa).

The region spanning 146 to 240 (DDPDALFIDM…YARKARDQGL (95 aa)) is the Rhodanese domain. Catalysis depends on Cys200, which acts as the Cysteine persulfide intermediate.

Belongs to the TrhO family.

The catalysed reaction is uridine(34) in tRNA + AH2 + O2 = 5-hydroxyuridine(34) in tRNA + A + H2O. Catalyzes oxygen-dependent 5-hydroxyuridine (ho5U) modification at position 34 in tRNAs, the first step in 5-carboxymethoxyuridine (cmo5U) biosynthesis. May be part of an alternate pathway, which is able to bypass cmo5U biogenesis in a subset of tRNAs under aerobic conditions. This is tRNA uridine(34) hydroxylase from Escherichia coli O6:K15:H31 (strain 536 / UPEC).